Reading from the N-terminus, the 444-residue chain is Transcriptional coactivator nsrH (444 aa).

The HTH iclR-type domain occupies 74–144 (ASQVSEILAC…ERDHVAHTPL (71 aa)). The H-T-H motif DNA-binding region spans 104-123 (IKDIADLTNVPESRLRRIIR).

It localises to the nucleus. Functionally, transcriptional coactivator; part of the gene cluster that mediates the biosynthesis of the tetrahydroxanthone dimer neosartorin, which exhibits antibacterial activity. This chain is Transcriptional coactivator nsrH, found in Aspergillus novofumigatus (strain IBT 16806).